The sequence spans 547 residues: Chaperonin GroEL (547 aa).

ATP-binding positions include 30-33 (TLGP), Lys-51, 87-91 (DGTTT), Gly-415, and Asp-496.

The protein belongs to the chaperonin (HSP60) family. As to quaternary structure, forms a cylinder of 14 subunits composed of two heptameric rings stacked back-to-back. Interacts with the co-chaperonin GroES.

It localises to the cytoplasm. The catalysed reaction is ATP + H2O + a folded polypeptide = ADP + phosphate + an unfolded polypeptide.. Together with its co-chaperonin GroES, plays an essential role in assisting protein folding. The GroEL-GroES system forms a nano-cage that allows encapsulation of the non-native substrate proteins and provides a physical environment optimized to promote and accelerate protein folding. The protein is Chaperonin GroEL of Mannheimia succiniciproducens (strain KCTC 0769BP / MBEL55E).